The sequence spans 209 residues: MAQRFKGSNLFLTALLCLASQGHAVGLGDMLERASQLSDKLHSLSTSLTNDLDTHFPPMGKILMPRPSMCHTASLQTPHDKDQALRVPESELLSLARALLLSWNDPLLLLTSEAPTLSHPQNGVIYSKTRELQDQSNSLSSGLDRLIHKIGSSSKSLSPLPFQGGDLGSDKNSRLINFYFLLSCFRRDSHKIDNFLKLLRCRAAKQDRC.

The N-terminal stretch at 1–24 (MAQRFKGSNLFLTALLCLASQGHA) is a signal peptide. Disulfide bonds link cysteine 70/cysteine 184 and cysteine 201/cysteine 209.

Belongs to the somatotropin/prolactin family.

It localises to the secreted. This chain is Prolactin (prl), found in Anguilla japonica (Japanese eel).